Reading from the N-terminus, the 241-residue chain is Glutamate/aspartate import ATP-binding protein GltL (241 aa).

An ABC transporter domain is found at 2-236; it reads ITLKNVSKWY…PKSDRAKDFL (235 aa). Residue 34 to 41 coordinates ATP; sequence GPSGSGKS.

This sequence belongs to the ABC transporter superfamily. The complex is composed of two ATP-binding proteins (GltL), two transmembrane proteins (GltJ and GltK) and a solute-binding protein (GltI).

The protein resides in the cell inner membrane. The enzyme catalyses a polar amino acid(out) + ATP + H2O = a polar amino acid(in) + ADP + phosphate + H(+). It catalyses the reaction L-glutamate(out) + ATP + H2O = L-glutamate(in) + ADP + phosphate + H(+). It carries out the reaction L-aspartate(out) + ATP + H2O = L-aspartate(in) + ADP + phosphate + H(+). Its function is as follows. Part of the ABC transporter complex GltIJKL involved in glutamate and aspartate uptake. Probably responsible for energy coupling to the transport system. In Escherichia coli O157:H7, this protein is Glutamate/aspartate import ATP-binding protein GltL (gltL).